We begin with the raw amino-acid sequence, 296 residues long: Phosphatidylglycerol--prolipoprotein diacylglyceryl transferase (296 aa).

The next 7 membrane-spanning stretches (helical) occupy residues 17–37 (LAVRWYGLMYLVGFIAAIVVG), 59–79 (MMFYGVLGTVLGGRLGYVLFY), 97–117 (GGMSFHGGFLGVTLAMMLFAW), 129–149 (FVAPMVPLGLAAGRLGNFING), 204–224 (SQLYEIALEGIALFFVLFLFA), 230–250 (MGAISALFLIGYGLARFTVEF), and 257–277 (FLGLLALGLSMGQWLSLPMIL). A 1,2-diacyl-sn-glycero-3-phospho-(1'-sn-glycerol) is bound at residue R142.

This sequence belongs to the Lgt family.

The protein resides in the cell inner membrane. It carries out the reaction L-cysteinyl-[prolipoprotein] + a 1,2-diacyl-sn-glycero-3-phospho-(1'-sn-glycerol) = an S-1,2-diacyl-sn-glyceryl-L-cysteinyl-[prolipoprotein] + sn-glycerol 1-phosphate + H(+). The protein operates within protein modification; lipoprotein biosynthesis (diacylglyceryl transfer). Its function is as follows. Catalyzes the transfer of the diacylglyceryl group from phosphatidylglycerol to the sulfhydryl group of the N-terminal cysteine of a prolipoprotein, the first step in the formation of mature lipoproteins. The sequence is that of Phosphatidylglycerol--prolipoprotein diacylglyceryl transferase from Burkholderia cenocepacia (strain HI2424).